Reading from the N-terminus, the 287-residue chain is Protease HtpX (287 aa).

The next 2 helical transmembrane spans lie at 4–24 (IFLL…VMSI) and 33–53 (GGLL…SLAI). H139 contacts Zn(2+). E140 is an active-site residue. H143 is a Zn(2+) binding site. 2 helical membrane-spanning segments follow: residues 154–174 (LIQG…AGII) and 195–215 (AVVF…VAYF). Residue E220 participates in Zn(2+) binding.

This sequence belongs to the peptidase M48B family. The cofactor is Zn(2+).

The protein resides in the cell inner membrane. The sequence is that of Protease HtpX from Shewanella halifaxensis (strain HAW-EB4).